Here is a 304-residue protein sequence, read N- to C-terminus: Acetyl-coenzyme A carboxylase carboxyl transferase subunit beta (304 aa).

One can recognise a CoA carboxyltransferase N-terminal domain in the interval 25 to 294; that stretch reads VWTKCDSCGQ…PSVVESKADT (270 aa). Residues C29, C32, C48, and C51 each coordinate Zn(2+). The C4-type zinc-finger motif lies at 29–51; sequence CDSCGQVLYRAELERNLEVCPKC.

This sequence belongs to the AccD/PCCB family. As to quaternary structure, acetyl-CoA carboxylase is a heterohexamer composed of biotin carboxyl carrier protein (AccB), biotin carboxylase (AccC) and two subunits each of ACCase subunit alpha (AccA) and ACCase subunit beta (AccD). The cofactor is Zn(2+).

The protein resides in the cytoplasm. It carries out the reaction N(6)-carboxybiotinyl-L-lysyl-[protein] + acetyl-CoA = N(6)-biotinyl-L-lysyl-[protein] + malonyl-CoA. It participates in lipid metabolism; malonyl-CoA biosynthesis; malonyl-CoA from acetyl-CoA: step 1/1. Its function is as follows. Component of the acetyl coenzyme A carboxylase (ACC) complex. Biotin carboxylase (BC) catalyzes the carboxylation of biotin on its carrier protein (BCCP) and then the CO(2) group is transferred by the transcarboxylase to acetyl-CoA to form malonyl-CoA. The polypeptide is Acetyl-coenzyme A carboxylase carboxyl transferase subunit beta (Yersinia pseudotuberculosis serotype O:1b (strain IP 31758)).